Consider the following 444-residue polypeptide: Phosphoglucosamine mutase (444 aa).

Ser-100 functions as the Phosphoserine intermediate in the catalytic mechanism. Positions 100, 240, 242, and 244 each coordinate Mg(2+). Ser-100 is modified (phosphoserine).

This sequence belongs to the phosphohexose mutase family. Requires Mg(2+) as cofactor. Post-translationally, activated by phosphorylation.

The catalysed reaction is alpha-D-glucosamine 1-phosphate = D-glucosamine 6-phosphate. In terms of biological role, catalyzes the conversion of glucosamine-6-phosphate to glucosamine-1-phosphate. The polypeptide is Phosphoglucosamine mutase (Moorella thermoacetica (strain ATCC 39073 / JCM 9320)).